Consider the following 383-residue polypeptide: Protein RecA (383 aa).

Residue 79 to 86 participates in ATP binding; sequence GPESSGKT.

The protein belongs to the RecA family.

The protein resides in the cytoplasm. Functionally, can catalyze the hydrolysis of ATP in the presence of single-stranded DNA, the ATP-dependent uptake of single-stranded DNA by duplex DNA, and the ATP-dependent hybridization of homologous single-stranded DNAs. It interacts with LexA causing its activation and leading to its autocatalytic cleavage. The chain is Protein RecA from Streptococcus gordonii (strain Challis / ATCC 35105 / BCRC 15272 / CH1 / DL1 / V288).